The sequence spans 245 residues: Carbohydrate deacetylase (245 aa).

2 residues coordinate Mg(2+): H59 and H121.

It belongs to the YdjC deacetylase family. Homodimer. Mg(2+) serves as cofactor.

Probably catalyzes the deacetylation of acetylated carbohydrates an important step in the degradation of oligosaccharides. This Clostridium beijerinckii (strain ATCC 51743 / NCIMB 8052) (Clostridium acetobutylicum) protein is Carbohydrate deacetylase.